The sequence spans 95 residues: Histone-like DNA-binding protein (95 aa).

The protein belongs to the bacterial histone-like protein family.

This chain is Histone-like DNA-binding protein, found in Rickettsia rickettsii.